We begin with the raw amino-acid sequence, 182 residues long: Superoxide dismutase [Cu-Zn] (182 aa).

The signal sequence occupies residues 1 to 19 (MFRTLTVVPLLALGLSLSA). Cys-20 is lipidated: N-palmitoyl cysteine. A lipid anchor (S-diacylglycerol cysteine) is attached at Cys-20. Cu cation-binding residues include His-69, His-71, and His-95. The cysteines at positions 76 and 175 are disulfide-linked. The segment at 91–118 (AAGGHFDPGASHNHDGPHARNDQGHGGD) is disordered. Positions 95, 104, 115, and 118 each coordinate Zn(2+). The segment covering 102-115 (HNHDGPHARNDQGH) has biased composition (basic and acidic residues).

The protein belongs to the Cu-Zn superoxide dismutase family. Cu cation is required as a cofactor. It depends on Zn(2+) as a cofactor.

It is found in the cell membrane. It carries out the reaction 2 superoxide + 2 H(+) = H2O2 + O2. Its function is as follows. Destroys radicals which are normally produced within the cells and which are toxic to biological systems. The sequence is that of Superoxide dismutase [Cu-Zn] (sodC) from Deinococcus radiodurans (strain ATCC 13939 / DSM 20539 / JCM 16871 / CCUG 27074 / LMG 4051 / NBRC 15346 / NCIMB 9279 / VKM B-1422 / R1).